The sequence spans 264 residues: Low molecular mass lipoprotein PBMHPC-23 (264 aa).

A signal peptide spans 1 to 23 (MKFLVVFAVVRACVTPACAEMSA).

Belongs to the 30 kDa lipoprotein family.

It localises to the secreted. The chain is Low molecular mass lipoprotein PBMHPC-23 from Bombyx mori (Silk moth).